The primary structure comprises 284 residues: Small ribosomal subunit protein uS5 (284 aa).

Over residues M1–E10 the composition is skewed to basic and acidic residues. Positions M1–E105 are disordered. Over residues E14 to E23 the composition is skewed to low complexity. The span at D24–A43 shows a compositional bias: basic and acidic residues. Low complexity predominate over residues E44–G67. Residues Q68–E105 are compositionally biased toward basic and acidic residues. Residues I110 to V173 form the S5 DRBM domain. The disordered stretch occupies residues D246–E284.

Belongs to the universal ribosomal protein uS5 family. As to quaternary structure, part of the 30S ribosomal subunit. Contacts proteins S4 and S8.

Functionally, with S4 and S12 plays an important role in translational accuracy. In terms of biological role, located at the back of the 30S subunit body where it stabilizes the conformation of the head with respect to the body. The polypeptide is Small ribosomal subunit protein uS5 (Erythrobacter litoralis (strain HTCC2594)).